Here is a 596-residue protein sequence, read N- to C-terminus: MENIRNFSIIAHIDHGKSTLADRLISECNAVEDRQMSSQVMDTMDIERERGITIKAQSVRLEYKMNDKKYILNLIDTPGHVDFSYEVSRSLASCEGAILVVDASQGVQAQTIANVYIAIEHNLEIIPVLNKIDLPNADPDRVKNEIEHIIGIDCTDAIEVSAKTGIGIKDLIEAIIKRIPAPKIEPKKPLKAIIYDSWFDNYLGALALIRVYDGEIHKNDEVFIMGTEKKHIVLDLMYPNPISPIKTEKISSGEIGIVVLGLKNVSDVSVGDTITLSNNKANTPIGGFERAKPFVFAGIYPIETDKFEDLRDALNKLKLNDSSISYEPETSLALGFGFRVGFLGLLHMEVIKERLEREFNLNLIATAPTVTYEIYLTNGEMLKIHNPSELPPISNIQMIKEPYSHATIITPAEFLGNLITLLNSRRGIQTKMDYITSDRVLLEYDIPTNEIIMDFYDKLKSGTKGYASFDYEPIDYKQGDLIKLDIKVAGENVDALSIIVPRDKALQKGRDLVKAMKEIVPRQLFEVAIQASIGNKIIARENVRAMGKNVTAKCYGGDITRKRKLLEKQKEGKKRMKSIGKVNLPSEAFLSVLKID.

In terms of domain architecture, tr-type G spans 2 to 183 (ENIRNFSIIA…AIIKRIPAPK (182 aa)). Residues 14-19 (DHGKST) and 130-133 (NKID) each bind GTP.

Belongs to the TRAFAC class translation factor GTPase superfamily. Classic translation factor GTPase family. LepA subfamily.

The protein localises to the cell inner membrane. The catalysed reaction is GTP + H2O = GDP + phosphate + H(+). Required for accurate and efficient protein synthesis under certain stress conditions. May act as a fidelity factor of the translation reaction, by catalyzing a one-codon backward translocation of tRNAs on improperly translocated ribosomes. Back-translocation proceeds from a post-translocation (POST) complex to a pre-translocation (PRE) complex, thus giving elongation factor G a second chance to translocate the tRNAs correctly. Binds to ribosomes in a GTP-dependent manner. The polypeptide is Elongation factor 4 (Campylobacter hominis (strain ATCC BAA-381 / DSM 21671 / CCUG 45161 / LMG 19568 / NCTC 13146 / CH001A)).